A 437-amino-acid chain; its full sequence is Beta-1,3-galactosyl-O-glycosyl-glycoprotein beta-1,6-N-acetylglucosaminyltransferase 3 (437 aa).

The Cytoplasmic portion of the chain corresponds to 1-6 (MVSWRR). A helical; Signal-anchor for type II membrane protein transmembrane segment spans residues 7 to 27 (FCWHYHGWTLGCYMLLAIIAL). Over 28–437 (KLSLRLKCDF…RHKAIYGTEL (410 aa)) the chain is Lumenal. 4 cysteine pairs are disulfide-bonded: Cys-70–Cys-227, Cys-161–Cys-381, Cys-182–Cys-209, and Cys-390–Cys-422. Asn-288 is a glycosylation site (N-linked (GlcNAc...) asparagine).

Belongs to the glycosyltransferase 14 family. N-glycosylated.

The protein resides in the golgi apparatus membrane. The catalysed reaction is a 3-O-[beta-D-galactosyl-(1-&gt;3)-N-acetyl-alpha-D-galactosaminyl]-L-seryl-[protein] + UDP-N-acetyl-alpha-D-glucosamine = 3-O-{beta-D-galactosyl-(1-&gt;3)-[N-acetyl-beta-D-glucosaminyl-(1-&gt;6)]-N-acetyl-alpha-D-galactosaminyl}-L-seryl-[protein] + UDP + H(+). The enzyme catalyses a 3-O-[beta-D-galactosyl-(1-&gt;3)-N-acetyl-alpha-D-galactosaminyl]-L-threonyl-[protein] + UDP-N-acetyl-alpha-D-glucosamine = a 3-O-{beta-D-galactosyl-(1-&gt;3)-[N-acetyl-beta-D-glucosaminyl-(1-&gt;6)]-N-acetyl-alpha-D-galactosaminyl}-L-threonyl-[protein] + UDP + H(+). It catalyses the reaction a beta-D-Gal-(1-&gt;4)-beta-D-GlcNAc-(1-&gt;3)-beta-D-Gal-(1-&gt;4)-beta-D-GlcNAc derivative + UDP-N-acetyl-alpha-D-glucosamine = a beta-D-Gal-(1-&gt;4)-beta-D-GlcNAc-(1-&gt;3)-[beta-D-GlcNAc-(1-&gt;6)]-beta-D-Gal-(1-&gt;4)-N-acetyl-beta-D-glucosaminyl derivative + UDP + H(+). It carries out the reaction 3-O-[N-acetyl-beta-D-glucosaminyl-(1-&gt;3)-N-acetyl-alpha-D-galactosaminyl]-L-seryl-[protein] + UDP-N-acetyl-alpha-D-glucosamine = 3-O-[N-acetyl-beta-D-glucosaminyl-(1-&gt;3)-[N-acetyl-beta-D-glucosaminyl-(1-&gt;6)]-N-acetyl-alpha-D-galactosaminyl]-L-seryl-[protein] + UDP + H(+). The catalysed reaction is a 3-O-[N-acetyl-beta-D-glucosaminyl-(1-&gt;3)-N-acetyl-alpha-D-galactosaminyl]-L-threonyl-[protein] + UDP-N-acetyl-alpha-D-glucosamine = 3-O-[N-acetyl-beta-D-glucosaminyl-(1-&gt;3)-[N-acetyl-beta-D-glucosaminyl-(1-&gt;6)]-N-acetyl-alpha-D-galactosaminyl]-L-threonyl-[protein] + UDP + H(+). Its pathway is protein modification; protein glycosylation. Functionally, glycosyltransferase that can synthesize all known mucin beta 6 N-acetylglucosaminides. Mediates core 2 and core 4 O-glycan branching, 2 important steps in mucin-type biosynthesis. Also has I-branching enzyme activity by converting linear into branched poly-N-acetyllactosaminoglycans, leading to introduce the blood group I antigen during embryonic development. This is Beta-1,3-galactosyl-O-glycosyl-glycoprotein beta-1,6-N-acetylglucosaminyltransferase 3 (Gcnt3) from Rattus norvegicus (Rat).